The primary structure comprises 255 residues: Lipoprotein-releasing system ATP-binding protein LolD 2 (255 aa).

One can recognise an ABC transporter domain in the interval 9–254; that stretch reads LEARGIRKSY…SDSAKLETVA (246 aa). 45 to 52 lines the ATP pocket; the sequence is GRSGSGKS.

This sequence belongs to the ABC transporter superfamily. Lipoprotein translocase (TC 3.A.1.125) family. In terms of assembly, the complex is composed of two ATP-binding proteins (LolD) and two transmembrane proteins (LolC and LolE).

It is found in the cell inner membrane. Its function is as follows. Part of the ABC transporter complex LolCDE involved in the translocation of mature outer membrane-directed lipoproteins, from the inner membrane to the periplasmic chaperone, LolA. Responsible for the formation of the LolA-lipoprotein complex in an ATP-dependent manner. The polypeptide is Lipoprotein-releasing system ATP-binding protein LolD 2 (Rhodopirellula baltica (strain DSM 10527 / NCIMB 13988 / SH1)).